Here is a 643-residue protein sequence, read N- to C-terminus: Transmembrane 9 superfamily member 4 (643 aa).

Residues 1–23 form the signal peptide; that stretch reads MAAAMIWWPRFLLLLCLTCKGST. Residues 24-282 are Extracellular-facing; sequence FYVPGVAPIN…TMSDVQIHWF (259 aa). The helical transmembrane segment at 283-303 threads the bilayer; sequence SIINSVVVVFFLSGILSMIII. The Cytoplasmic segment spans residues 304-347; that stretch reads RTLRKDIANYNKEDDIEDTMEESGWKLVHGDVFRPPQYPMILSS. Position 313 is a phosphotyrosine (Tyr313). Residues 348–368 form a helical membrane-spanning segment; sequence LLGSGIQLFCMILIVIFVAML. Topologically, residues 369–377 are extracellular; sequence GMLSPSSRG. Residues 378 to 398 traverse the membrane as a helical segment; that stretch reads ALMTTACFLFMFMGVFGGFSA. Residues 399–417 are Cytoplasmic-facing; that stretch reads GRLYRTLKGHRWKKGAFCT. The helical transmembrane segment at 418-438 threads the bilayer; it reads ATLYPGVVFGICFVLNCFIWG. Residues 439–450 lie on the Extracellular side of the membrane; it reads KHSSGAVPFPTM. A helical transmembrane segment spans residues 451–471; it reads VALLCMWFGISLPLVYLGYYF. At 472–502 the chain is on the cytoplasmic side; the sequence is GFRKQPYDNPVRTNQIPRQIPEQRWYMNRFV. The chain crosses the membrane as a helical span at residues 503–523; that stretch reads GILMAGILPFGAMFIELFFIF. Topologically, residues 524–536 are extracellular; that stretch reads SAIWENQFYYLFG. Residues 537–557 traverse the membrane as a helical segment; that stretch reads FLFLVFIILVVSCSQISIVMV. Residues 558 to 571 are Cytoplasmic-facing; that stretch reads YFQLCAEDYRWWWR. Residues 572 to 592 form a helical membrane-spanning segment; it reads NFLVSGGSAFYVLVYAIFYFV. The Extracellular portion of the chain corresponds to 593–599; the sequence is NKLDIVE. Residues 600–620 form a helical membrane-spanning segment; that stretch reads FIPSLLYFGYTTLMVLSFWLL. At 621 to 643 the chain is on the cytoplasmic side; sequence TGTIGFYAAYMFVRKIYAAVKID.

The protein belongs to the nonaspanin (TM9SF) (TC 9.A.2) family.

It is found in the membrane. The protein localises to the golgi apparatus. Its subcellular location is the early endosome. In terms of biological role, associates with proteins harboring glycine-rich transmembrane domains and ensures their efficient localization to the cell surface. The protein is Transmembrane 9 superfamily member 4 (Tm9sf4) of Rattus norvegicus (Rat).